The primary structure comprises 251 residues: MPRQFFVGGNFKMNGTAESITAIIKNLNEAKLDETTEVVVSPPALYLTLAQQVADEKKKVAVSSQNVFDKPNGAFTGEISVSQLQDAKIPWTIIGHSERRVILKETDEFIARKVKAAIDGGISVIFCIGETLEEREADKTIEVVTKQLNAAAKELTKEQWSKVVIAYEPVWAIGTGKVATTQQAQEVHAAIRKWLADAISPEASENTRIIYGGSVSEKNCRELAQERDVDGFLVGGASLKPAFVDIINARL.

Substrate contacts are provided by asparagine 10 and lysine 12. The active-site Electrophile is the histidine 96. The Proton acceptor role is filled by glutamate 168.

This sequence belongs to the triosephosphate isomerase family. As to quaternary structure, homodimer.

It carries out the reaction D-glyceraldehyde 3-phosphate = dihydroxyacetone phosphate. The protein operates within carbohydrate biosynthesis; gluconeogenesis. Its pathway is carbohydrate degradation; glycolysis; D-glyceraldehyde 3-phosphate from glycerone phosphate: step 1/1. The polypeptide is Triosephosphate isomerase (tpiA) (Aspergillus oryzae (strain ATCC 42149 / RIB 40) (Yellow koji mold)).